The primary structure comprises 414 residues: Histidine--tRNA ligase (414 aa).

This sequence belongs to the class-II aminoacyl-tRNA synthetase family. Homodimer.

The protein localises to the cytoplasm. The catalysed reaction is tRNA(His) + L-histidine + ATP = L-histidyl-tRNA(His) + AMP + diphosphate + H(+). In Ehrlichia ruminantium (strain Welgevonden), this protein is Histidine--tRNA ligase.